Reading from the N-terminus, the 383-residue chain is Paralemmin-1 (383 aa).

N-acetylmethionine is present on Met1. The stretch at 5–102 (ATDTASQQER…KEIDVLEFGE (98 aa)) forms a coiled coil. 3 disordered regions span residues 51 to 163 (RERW…GSTM), 242 to 295 (TLSE…GQEP), and 334 to 375 (ATPR…MKKP). Positions 69 to 96 (DMRKQMQEDEQKARGLEESITRLEKEID) are enriched in basic and acidic residues. 2 stretches are compositionally biased toward polar residues: residues 109 to 124 (KENS…QSAS) and 133 to 143 (ETLVNAQQTPL). Residues Ser116, Ser122, and Ser124 each carry the phosphoserine modification. A phosphothreonine mark is found at Thr141, Thr145, and Thr153. 2 positions are modified to phosphoserine: Ser157 and Ser161. Position 242 is a phosphothreonine (Thr242). Position 244 is a phosphoserine (Ser244). Basic and acidic residues predominate over residues 257 to 273 (GLAEDVTRTTPSRREIT). Low complexity predominate over residues 285 to 295 (GPPGIQPGQEP). Ser345 is subject to Phosphoserine. Positions 357–367 (QTGPTTTPSDT) are enriched in polar residues. A phosphothreonine mark is found at Thr361, Thr362, and Thr363. Ser365 carries the post-translational modification Phosphoserine. At Thr367 the chain carries Phosphothreonine. S-palmitoyl cysteine attachment occurs at residues Cys377 and Cys379. Cys380 bears the Cysteine methyl ester mark. Cys380 carries the S-farnesyl cysteine lipid modification. Residues 381 to 383 (SVM) constitute a propeptide, removed in mature form.

Belongs to the paralemmin family. Interacts with dopamine receptor DRD3. Expression is highest in brain, intermediate in adrenal gland and kidney, and much lower or undetectable in other tissues. Isoform 1 is the predominant isoform in most tissues except brain and kidney where isoform 2 predominates.

Its subcellular location is the cell membrane. The protein resides in the cell projection. It is found in the filopodium membrane. It localises to the axon. The protein localises to the dendrite. Its subcellular location is the dendritic spine. The protein resides in the basolateral cell membrane. It is found in the apicolateral cell membrane. Its function is as follows. Involved in plasma membrane dynamics and cell process formation. Isoform 1 and isoform 2 are necessary for axonal and dendritic filopodia induction, for dendritic spine maturation and synapse formation in a palmitoylation-dependent manner. This chain is Paralemmin-1 (Palm), found in Mus musculus (Mouse).